A 173-amino-acid polypeptide reads, in one-letter code: Crossover junction endodeoxyribonuclease RuvC (173 aa).

Catalysis depends on residues aspartate 8, glutamate 67, and aspartate 139. Mg(2+) contacts are provided by aspartate 8, glutamate 67, and aspartate 139.

The protein belongs to the RuvC family. Homodimer which binds Holliday junction (HJ) DNA. The HJ becomes 2-fold symmetrical on binding to RuvC with unstacked arms; it has a different conformation from HJ DNA in complex with RuvA. In the full resolvosome a probable DNA-RuvA(4)-RuvB(12)-RuvC(2) complex forms which resolves the HJ. Mg(2+) serves as cofactor.

It localises to the cytoplasm. The catalysed reaction is Endonucleolytic cleavage at a junction such as a reciprocal single-stranded crossover between two homologous DNA duplexes (Holliday junction).. In terms of biological role, the RuvA-RuvB-RuvC complex processes Holliday junction (HJ) DNA during genetic recombination and DNA repair. Endonuclease that resolves HJ intermediates. Cleaves cruciform DNA by making single-stranded nicks across the HJ at symmetrical positions within the homologous arms, yielding a 5'-phosphate and a 3'-hydroxyl group; requires a central core of homology in the junction. The consensus cleavage sequence is 5'-(A/T)TT(C/G)-3'. Cleavage occurs on the 3'-side of the TT dinucleotide at the point of strand exchange. HJ branch migration catalyzed by RuvA-RuvB allows RuvC to scan DNA until it finds its consensus sequence, where it cleaves and resolves the cruciform DNA. The sequence is that of Crossover junction endodeoxyribonuclease RuvC from Shewanella sediminis (strain HAW-EB3).